Reading from the N-terminus, the 372-residue chain is GTPase Obg (372 aa).

The 159-residue stretch at 1–159 (MKFIDEARIE…RMLKLELKVL (159 aa)) folds into the Obg domain. Residues 128-147 (LHFKSSTNRAPRQKTDGKPG) are disordered. An OBG-type G domain is found at 160–334 (ADVGLLGMPN…LVYAIHDYLV (175 aa)). GTP-binding positions include 166-173 (GMPNAGKS), 191-195 (FTTLA), 213-216 (DIPG), 284-287 (NKLD), and 315-317 (SAL). The Mg(2+) site is built by S173 and T193.

It belongs to the TRAFAC class OBG-HflX-like GTPase superfamily. OBG GTPase family. In terms of assembly, monomer. It depends on Mg(2+) as a cofactor.

The protein resides in the cytoplasm. In terms of biological role, an essential GTPase which binds GTP, GDP and possibly (p)ppGpp with moderate affinity, with high nucleotide exchange rates and a fairly low GTP hydrolysis rate. Plays a role in control of the cell cycle, stress response, ribosome biogenesis and in those bacteria that undergo differentiation, in morphogenesis control. This chain is GTPase Obg, found in Burkholderia mallei (strain NCTC 10247).